The following is a 220-amino-acid chain: Zip homologous protein 1 (220 aa).

The RING-type zinc finger occupies 6 to 44; that stretch reads CNGCGCSPSKRQFFITACSHVFCETCRTTPTADFCHLCK. Positions 124–155 form a coiled coil; the sequence is LTSFEENNRKKLEDIERENEKLRNLISALELK. Disordered regions lie at residues 166 to 186 and 201 to 220; these read EFFM…SDVD and RSDS…GSLF. Positions 171–180 are enriched in polar residues; the sequence is GTPTSSNPSV.

As to quaternary structure, interacts with zhp-2; the interaction is required for their chromosome association and stability. Expressed in the germline.

It is found in the chromosome. Recruited co-dependently with zhp-2 to the synaptonemal complex between homologous chromosome pairs to regulate the formation and number of crossover events between homologs during meiotic recombination. Together with zhp-2, promotes the accumulation of pro-crossover proteins, including zhp-3 and zhp-4, at a designated crossover site along the recombination intermediate. Limits the number of crossover sites along a recombination intermediate by restricting the association of these pro-crossover proteins with other recombination sites during late prophase. Also, together with zhp-2, plays a role in chromosome remodeling following crossover formation to promote two successive rounds of chromosome segregation during meiosis. In Caenorhabditis elegans, this protein is Zip homologous protein 1.